The sequence spans 172 residues: RNA silencing suppressor p19 (172 aa).

2 stretches are compositionally biased toward basic and acidic residues: residues 1–14 and 150–172; these read MERA…REQA and SERE…EESE. 2 disordered regions span residues 1-34 and 145-172; these read MERA…KLPD and LQPT…EESE.

Belongs to the tombusvirus protein p19 family. Homodimer.

In terms of biological role, viral suppressor of RNA silencing which binds specifically to silencing RNAs (siRNAs). Acts as a molecular caliper to specifically select siRNAs based on the length of the duplex region of the RNA. This is RNA silencing suppressor p19 from Cymbidium ringspot virus (CymRSV).